Reading from the N-terminus, the 610-residue chain is MCGIVGAVAQRDVAEILVEGLRRLEYRGYDSAGVAVVDSQSNLTRIRRLGKVQELADAVDQAEVVGGTGIAHTRWATHGEPSEINAHPHQSGDISVVHNGIIENHETLRELLQSRGYVFESQTDTEVIAHLVEWELRTAASLLEAVQKTVKQLEGAYGTVVLDRNDPSRIVVARSGSPIVIGFGVGENFLASDQLALLNVTRRFMYLEEGDVAEITRREVAVYDALGERVEREIAESNAEHDAGDKGQYRHFMQKEIYEQPTALINTMEGRITADSVVTEAIGVNAAEILSKVEHVQIVACGTSYNAGMTARYWFEDIAGVSCDVEIASEFRYRKFVTRPNSLLITLSQSGETADTLAALRLAKEKGYMAAMTICNVAGSSLVRESDFAFMTRAGVEIGVASTKAFTTQLAALLMLVTALGKQQGRISKEKEKEIVEALHALPKQINAALSFEKDIEALATDFADKHHTLFLGRGEFYPIAMEASLKLKEISYIHAEAYAAGELKHGPLALIDADMPVVVVAPSNDLLEKLKSNVEEVRARGGLLYVFADADAGFEGDETMKIITMPHVSEITAAIYYTIPMQLLSYYVALIKGTDVDQPRNLAKAVTVE.

Residue Cys2 is the Nucleophile; for GATase activity of the active site. Positions 2 to 218 (CGIVGAVAQR…EGDVAEITRR (217 aa)) constitute a Glutamine amidotransferase type-2 domain. SIS domains lie at 286–426 (AAEI…QQGR) and 459–600 (LATD…VDQP). Residue Lys605 is the For Fru-6P isomerization activity of the active site.

Homodimer.

It is found in the cytoplasm. It catalyses the reaction D-fructose 6-phosphate + L-glutamine = D-glucosamine 6-phosphate + L-glutamate. Its function is as follows. Catalyzes the first step in hexosamine metabolism, converting fructose-6P into glucosamine-6P using glutamine as a nitrogen source. In Vibrio vulnificus (strain YJ016), this protein is Glutamine--fructose-6-phosphate aminotransferase [isomerizing].